Here is a 296-residue protein sequence, read N- to C-terminus: SHSP domain-containing protein CPUR_05420 (296 aa).

The interval 50 to 83 (AWQTCPQQRHPHQPDVSGPPGSGFGEQPSQDTPN) is disordered. The region spanning 169–296 (ETKKSFTPDI…GKGVKEITIV (128 aa)) is the sHSP domain.

Belongs to the small heat shock protein (HSP20) family.

In terms of biological role, monooxygenase; part of the ergochrome gene cluster responsible for the typical purple-black color of the ergot sclerotia. The ergochrome gene cluster produces several ergot pigments including the yellow ergochrome secalonic acid and its derivatives, as well as the red anthraquinones endocrocin and clavorubin. The pathway begins with the synthesis of atrochrysone thioester by the polyketide synthase (PKS) CPUR_05437. The atrochrysone carboxyl ACP thioesterase CPUR_05436 then breaks the thioester bond and releases the atrochrysone carboxylic acid from CPUR_05437. The atrochrysone carboxylic acid is then converted to atrochrysone which is further transformed into emodin anthrone. The next step is performed by the anthrone oxygenase CPUR_05434 that catalyzes the oxidation of emodinanthrone to emodin. Emodin is further modified to yield monodictyphenone via several steps involving CPUR_05427, CPUR_05428, CPUR_05429 and CPUR_05430. The short chain dehydrogenase/reductase CPUR_05418 then catalyzes the C-5 ketoreduction to give the xanthone skeleton of the monomeric units. Ergochromes formation requires further dimerization steps of different xanthone units, probably catalyzed by the cytochrome P450 monooxygenase CPUR_05419. CPUR_05425, CPUR_05426 and CPUR_05431 are unique to Claviceps, thus it is likely that they are involved in further modification of xanthone units or in their dimerization. The yellow ergochromes and the red anthraquinone pigments endocrocin and clavorubin are products from the same PKS derived precursors and the latter are likely shunt products in the pathway of xanthone biosynthesis. It is proposed that atrochrysone carboxylic acid released from the PKS CPUR_05437 can also be converted to endocrocin anthrone which is further oxidized into endocrocin by CPUR_05435. Endocrocin could be then modified to clavorubin, possibly by CPUR_05423 and CPUR_05431. Clavorubin is the principal anthraquinone metabolite produced by the cluster with a much higher yield compared to endocrocin. The protein is SHSP domain-containing protein CPUR_05420 of Claviceps purpurea (strain 20.1) (Ergot fungus).